A 97-amino-acid chain; its full sequence is Aspartyl/glutamyl-tRNA(Asn/Gln) amidotransferase subunit C (97 aa).

Belongs to the GatC family. In terms of assembly, heterotrimer of A, B and C subunits.

The catalysed reaction is L-glutamyl-tRNA(Gln) + L-glutamine + ATP + H2O = L-glutaminyl-tRNA(Gln) + L-glutamate + ADP + phosphate + H(+). It carries out the reaction L-aspartyl-tRNA(Asn) + L-glutamine + ATP + H2O = L-asparaginyl-tRNA(Asn) + L-glutamate + ADP + phosphate + 2 H(+). Allows the formation of correctly charged Asn-tRNA(Asn) or Gln-tRNA(Gln) through the transamidation of misacylated Asp-tRNA(Asn) or Glu-tRNA(Gln) in organisms which lack either or both of asparaginyl-tRNA or glutaminyl-tRNA synthetases. The reaction takes place in the presence of glutamine and ATP through an activated phospho-Asp-tRNA(Asn) or phospho-Glu-tRNA(Gln). The sequence is that of Aspartyl/glutamyl-tRNA(Asn/Gln) amidotransferase subunit C from Listeria innocua serovar 6a (strain ATCC BAA-680 / CLIP 11262).